The sequence spans 174 residues: Period clock protein (174 aa).

The segment at serine 46 to threonine 134 is disordered. Repeat copies occupy residues glycine 49–threonine 50, glycine 51–alanine 52, glycine 53–threonine 54, glycine 55–threonine 56, glycine 57–threonine 58, glycine 59–threonine 60, glycine 61–threonine 62, glycine 63–threonine 64, glycine 65–threonine 66, glycine 67–threonine 68, glycine 69–threonine 70, glycine 71–threonine 72, glycine 73–threonine 74, glycine 75–threonine 76, glycine 77–threonine 78, glycine 79–threonine 80, glycine 81–threonine 82, glycine 83–threonine 84, glycine 85–threonine 86, glycine 87–threonine 88, glycine 89–threonine 90, glycine 91–threonine 92, glycine 93–threonine 94, glycine 95–threonine 96, glycine 97–threonine 98, glycine 99–threonine 100, glycine 101–threonine 102, glycine 103–threonine 104, glycine 105–threonine 106, glycine 107–threonine 108, glycine 109–threonine 110, glycine 111–threonine 112, glycine 113–threonine 114, glycine 115–threonine 116, glycine 117–threonine 118, glycine 119–threonine 120, glycine 121–threonine 122, glycine 123–threonine 124, glycine 125–threonine 126, glycine 127–threonine 128, glycine 129–threonine 130, glycine 131–threonine 132, glycine 133–threonine 134, glycine 135–threonine 136, and glycine 137–threonine 138. The interval glycine 49–threonine 138 is 45 X 2 AA tandem repeats of G-[TA]. The segment covering threonine 50 to threonine 134 has biased composition (gly residues).

Its subcellular location is the plastid. The protein localises to the chloroplast. The sequence is that of Period clock protein from Acetabularia acetabulum (Mermaid's wine glass).